The chain runs to 122 residues: Large ribosomal subunit protein uL14 (122 aa).

This sequence belongs to the universal ribosomal protein uL14 family. Part of the 50S ribosomal subunit. Forms a cluster with proteins L3 and L19. In the 70S ribosome, L14 and L19 interact and together make contacts with the 16S rRNA in bridges B5 and B8.

In terms of biological role, binds to 23S rRNA. Forms part of two intersubunit bridges in the 70S ribosome. This Roseiflexus castenholzii (strain DSM 13941 / HLO8) protein is Large ribosomal subunit protein uL14.